The following is a 188-amino-acid chain: Peroxiredoxin y4vD (188 aa).

A Thioredoxin domain is found at 2–152; that stretch reads PVKKRVPFVA…VEQWFEEEGF (151 aa). Catalysis depends on Cys-56, which acts as the Cysteine sulfenic acid (-SOH) intermediate (for peroxiredoxin activity).

This sequence belongs to the peroxiredoxin family. Prx5 subfamily. Monomer.

The enzyme catalyses a hydroperoxide + 2 glutathione = an alcohol + glutathione disulfide + H2O. In terms of biological role, thiol-specific peroxidase that catalyzes the reduction of hydrogen peroxide and organic hydroperoxides to water and alcohols, respectively. Plays a role in cell protection against oxidative stress by detoxifying peroxides. The sequence is that of Peroxiredoxin y4vD from Sinorhizobium fredii (strain NBRC 101917 / NGR234).